The sequence spans 452 residues: Exodeoxyribonuclease 7 large subunit (452 aa).

It belongs to the XseA family. In terms of assembly, heterooligomer composed of large and small subunits.

It localises to the cytoplasm. The catalysed reaction is Exonucleolytic cleavage in either 5'- to 3'- or 3'- to 5'-direction to yield nucleoside 5'-phosphates.. Functionally, bidirectionally degrades single-stranded DNA into large acid-insoluble oligonucleotides, which are then degraded further into small acid-soluble oligonucleotides. In Bacillus thuringiensis (strain Al Hakam), this protein is Exodeoxyribonuclease 7 large subunit.